Reading from the N-terminus, the 230-residue chain is Probable tetraspanin tspD (230 aa).

Over Met-1 to Asn-20 the chain is Cytoplasmic. A helical transmembrane segment spans residues Val-21–Phe-41. The Extracellular segment spans residues Ser-42–Pro-65. A helical membrane pass occupies residues Ala-66–Ala-86. Over Tyr-87–Lys-90 the chain is Cytoplasmic. The helical transmembrane segment at Met-91 to Ile-111 threads the bilayer. The Extracellular portion of the chain corresponds to Gly-112–Ser-200. N-linked (GlcNAc...) asparagine glycans are attached at residues Asn-133, Asn-138, Asn-163, and Asn-179. A helical transmembrane segment spans residues Ala-201–Val-221. At Arg-222–Arg-230 the chain is on the cytoplasmic side.

This sequence belongs to the tetraspanin (TM4SF) family.

Its subcellular location is the membrane. This chain is Probable tetraspanin tspD (tspD), found in Dictyostelium discoideum (Social amoeba).